A 95-amino-acid chain; its full sequence is Aspartyl/glutamyl-tRNA(Asn/Gln) amidotransferase subunit C (95 aa).

Belongs to the GatC family. Heterotrimer of A, B and C subunits.

The enzyme catalyses L-glutamyl-tRNA(Gln) + L-glutamine + ATP + H2O = L-glutaminyl-tRNA(Gln) + L-glutamate + ADP + phosphate + H(+). It carries out the reaction L-aspartyl-tRNA(Asn) + L-glutamine + ATP + H2O = L-asparaginyl-tRNA(Asn) + L-glutamate + ADP + phosphate + 2 H(+). Allows the formation of correctly charged Asn-tRNA(Asn) or Gln-tRNA(Gln) through the transamidation of misacylated Asp-tRNA(Asn) or Glu-tRNA(Gln) in organisms which lack either or both of asparaginyl-tRNA or glutaminyl-tRNA synthetases. The reaction takes place in the presence of glutamine and ATP through an activated phospho-Asp-tRNA(Asn) or phospho-Glu-tRNA(Gln). The polypeptide is Aspartyl/glutamyl-tRNA(Asn/Gln) amidotransferase subunit C (Bradyrhizobium diazoefficiens (strain JCM 10833 / BCRC 13528 / IAM 13628 / NBRC 14792 / USDA 110)).